The chain runs to 815 residues: Cell division control protein 53 (815 aa).

The interval D9–S280 is required for interaction with SKP1/CBF3D and F-box protein. The segment at K448–Q748 is required for interaction with CDC34/UBC3. The Cullin neddylation domain occupies E746–D807. A Glycyl lysine isopeptide (Lys-Gly) (interchain with G-Cter in NEDD8) cross-link involves residue K760.

The protein belongs to the cullin family. In terms of assembly, component of multiple SCF (SKP1-CUL1-F-box) E3 ubiquitin-protein ligase complexes formed of CUL1, SKP1/HRT1, RBX1 and a variable F-box domain-containing protein as substrate-specific adapter. Component of the SCF(CDC4) complex containing CDC4. Component of the SCF(MET30) complex containing MET30. Component of the SCF(GRR1) complex containing GRR1. Component of the probable SCF(DIA2) complex containing DIA2. Component of the probable SCF(YDR131C) complex containing YDR131C. Component of the probable SCF(YDR306C) complex containing YDR306C. Component of the probable SCF(YLR224W) complex containing YLR224W. Component of the probable SCF(YJL149W) complex containing YJL149W. Component of the probable SCF(YNL311C) complex containing YNL311C. Component of the probable SCF(MDM30) complex containing MDM30. Component of the probable SCF(UFO1) complex containing UFO1. Component of the probable SCF(HRT3) complex containing HRT3. Component of the probable SCF(YBR280C) complex containing YBR280C. Component of the probable SCF(YBR352W) complex containing YBR352W. Interacts with DCN1, YBR280C, YLR224W and YLR352W. The unneddylated form interacts with LAG2/CAND1 and the interaction mediates the exchange of the F-box substrate-specific subunit. In terms of processing, neddylated; enhancing the ubiquitin-ligase activity.

The protein localises to the cytoplasm. Its subcellular location is the nucleus. Functionally, core component of multiple cullin-RING-based SCF (SKP1-CUL1-F-box) E3 ubiquitin-protein ligase complexes which mediate the ubiquitination and subsequent proteasomal degradation of target proteins. As a scaffold protein may contribute to catalysis through positioning of the substrate and the ubiquitin-conjugating enzyme. The SCF complex associates with CDC34 as the E2 ubiquitin-conjugating enzyme. The functional specificity of the SCF complex depends on the type of F-box protein. SCF(CDC4) controls the G1-to-S phase transition; it directs ubiquitination of the phosphorylated CDK inhibitor SIC1 and of CDC6. SCF(CDC4) directs ubiquitination of GCN4. SCF(GRR1) directs ubiquitination of phosphorylated CLN1, CLN2 and GIC2. SCF(MET30) directs ubiquitination of MET4. SCF(DIA2) is specifically involved in the pheromone induced degradation of phosphorylated TEC1. SCF(MDM30) seems to direct ubiquitination of FZ01. Involved in the regulation of methionine biosynthesis genes. This chain is Cell division control protein 53 (CDC53), found in Saccharomyces cerevisiae (strain ATCC 204508 / S288c) (Baker's yeast).